The primary structure comprises 305 residues: Probable alpha-L-glutamate ligase (305 aa).

One can recognise an ATP-grasp domain in the interval 119 to 301 (LQVLAAQHIP…IAGLIIDYLL (183 aa)). ATP contacts are provided by residues Lys155, 192-193 (DF), Asp201, and 225-227 (RAN). Mg(2+)-binding residues include Asp262, Glu274, and Asn276. Asp262, Glu274, and Asn276 together coordinate Mn(2+).

Belongs to the RimK family. Requires Mg(2+) as cofactor. It depends on Mn(2+) as a cofactor.

The protein is Probable alpha-L-glutamate ligase of Haemophilus ducreyi (strain 35000HP / ATCC 700724).